A 307-amino-acid chain; its full sequence is MLAQRTLKSLTKAVGVGLHSGQRVELTLRPAPPDTGIVFRRVDLPQPVDIVISAQAVTDTRLASTISAGGAKVHTVEHLMSACAGLGIDNLYIDITAEEVPILDGSASSFVFLLQSAGIELQSAPKRFIRVLKPVEVREGEGATAKWARLSPYEGYKLSFEIDFDHPAVDSTGQRVEFDLSSGSYSRDIARARTFGFTKDVEMMRANGLALGGGLDNAIVMDDYKVLNSEGLRYNDEFVKHKILDAMGDLYLLGKPLLAAYSAFRSGHAMNNKLLRELLAHQDAYEVVTFADEKRAPQGFATLARAW.

Zn(2+) contacts are provided by His-78, His-241, and Asp-245. His-268 serves as the catalytic Proton donor.

Belongs to the LpxC family. It depends on Zn(2+) as a cofactor.

It catalyses the reaction a UDP-3-O-[(3R)-3-hydroxyacyl]-N-acetyl-alpha-D-glucosamine + H2O = a UDP-3-O-[(3R)-3-hydroxyacyl]-alpha-D-glucosamine + acetate. It participates in glycolipid biosynthesis; lipid IV(A) biosynthesis; lipid IV(A) from (3R)-3-hydroxytetradecanoyl-[acyl-carrier-protein] and UDP-N-acetyl-alpha-D-glucosamine: step 2/6. Catalyzes the hydrolysis of UDP-3-O-myristoyl-N-acetylglucosamine to form UDP-3-O-myristoylglucosamine and acetate, the committed step in lipid A biosynthesis. The chain is UDP-3-O-acyl-N-acetylglucosamine deacetylase from Polaromonas sp. (strain JS666 / ATCC BAA-500).